Consider the following 329-residue polypeptide: MAKKPVRVTVTGAAGQIGYALLFRVASGQMLGPDQPIILQMLELPIDKVQAALKGVMMELEDCAFPLLADMIGTGDPKVAFKDSDYALLVGARPRGPGMERKDLLLENAKIFIEQGKAMNAVASRDIRVIVVGNPANTNAWIAMKSAPDLPKGNFTAMLRLDHNRAKSQLATRTGKPVASVEKMIVWGNHSPTMYPDIRFCTVDGQPAVKLVNDEAWYRNEYIPKVGKRGAAIIEARGLSSAASAANAAIDHMHDWALGTNGKWVTMGLPSDGSYGIPEGTMYGVPVTCTPGKYERVKGLEIDAFSREKMDFTLKELTEEQAGVKEMVK.

12–18 (GAAGQIG) serves as a coordination point for NAD(+). 2 residues coordinate substrate: Arg95 and Arg101. NAD(+) is bound by residues Asn108, Gln115, and 132 to 134 (VGN). Substrate-binding residues include Asn134 and Arg165. His190 acts as the Proton acceptor in catalysis.

This sequence belongs to the LDH/MDH superfamily. MDH type 2 family. Homodimer.

The enzyme catalyses (S)-malate + NAD(+) = oxaloacetate + NADH + H(+). Its activity is regulated as follows. Substrate inhibition is observed at high concentrations of oxaloacetate. Functionally, catalyzes the reversible oxidation of malate to oxaloacetate. Catalyzes the reduction of oxaloacetate more efficiently than the oxidation of malate. The sequence is that of Malate dehydrogenase from Syntrophobacter fumaroxidans (strain DSM 10017 / MPOB).